The sequence spans 497 residues: Serine hydroxymethyltransferase (497 aa).

Residues Leu-176 and 180–182 (GHL) each bind (6S)-5,6,7,8-tetrahydrofolate. Lys-289 is modified (N6-(pyridoxal phosphate)lysine).

This sequence belongs to the SHMT family. In terms of assembly, homodimer. Pyridoxal 5'-phosphate serves as cofactor.

Its subcellular location is the cytoplasm. The catalysed reaction is (6R)-5,10-methylene-5,6,7,8-tetrahydrofolate + glycine + H2O = (6S)-5,6,7,8-tetrahydrofolate + L-serine. It participates in one-carbon metabolism; tetrahydrofolate interconversion. It functions in the pathway amino-acid biosynthesis; glycine biosynthesis; glycine from L-serine: step 1/1. Its function is as follows. Catalyzes the reversible interconversion of serine and glycine with tetrahydrofolate (THF) serving as the one-carbon carrier. This reaction serves as the major source of one-carbon groups required for the biosynthesis of purines, thymidylate, methionine, and other important biomolecules. Also exhibits THF-independent aldolase activity toward beta-hydroxyamino acids, producing glycine and aldehydes, via a retro-aldol mechanism. This Chlamydia trachomatis serovar L2b (strain UCH-1/proctitis) protein is Serine hydroxymethyltransferase.